The sequence spans 58 residues: Conotoxin Leo-T2 (58 aa).

An N-terminal signal peptide occupies residues 1 to 22; the sequence is MRCLPVFIILPLLIPSAPSVDA. Positions 23 to 47 are excised as a propeptide; the sequence is QPMTEDDVPLASFHEQTLQELWNKR.

Belongs to the conotoxin T superfamily. Contains 2 disulfide bonds that can be either 'C1-C3, C2-C4' or 'C1-C4, C2-C3', since these disulfide connectivities have been observed for conotoxins with cysteine framework V (for examples, see AC P0DQQ7 and AC P81755). In terms of tissue distribution, expressed by the venom duct.

The protein localises to the secreted. The polypeptide is Conotoxin Leo-T2 (Conus leopardus (Leopard cone)).